The primary structure comprises 98 residues: Acylphosphatase (98 aa).

One can recognise an Acylphosphatase-like domain in the interval 12–98; it reads TYYVRVRGVV…DKRFERFQQH (87 aa). Active-site residues include R27 and N45.

This sequence belongs to the acylphosphatase family.

The catalysed reaction is an acyl phosphate + H2O = a carboxylate + phosphate + H(+). The chain is Acylphosphatase (acyP) from Burkholderia mallei (strain NCTC 10247).